The following is a 56-amino-acid chain: Large ribosomal subunit protein bL33 (56 aa).

Belongs to the bacterial ribosomal protein bL33 family.

This is Large ribosomal subunit protein bL33 from Dichelobacter nodosus (strain VCS1703A).